The primary structure comprises 71 residues: UPF0434 protein Csal_1588 (71 aa).

The protein belongs to the UPF0434 family.

In Chromohalobacter salexigens (strain ATCC BAA-138 / DSM 3043 / CIP 106854 / NCIMB 13768 / 1H11), this protein is UPF0434 protein Csal_1588.